Consider the following 285-residue polypeptide: Bifunctional protein FolD (285 aa).

NADP(+)-binding positions include 165 to 167 (GRS) and serine 190.

Belongs to the tetrahydrofolate dehydrogenase/cyclohydrolase family. As to quaternary structure, homodimer.

It catalyses the reaction (6R)-5,10-methylene-5,6,7,8-tetrahydrofolate + NADP(+) = (6R)-5,10-methenyltetrahydrofolate + NADPH. It carries out the reaction (6R)-5,10-methenyltetrahydrofolate + H2O = (6R)-10-formyltetrahydrofolate + H(+). The protein operates within one-carbon metabolism; tetrahydrofolate interconversion. Catalyzes the oxidation of 5,10-methylenetetrahydrofolate to 5,10-methenyltetrahydrofolate and then the hydrolysis of 5,10-methenyltetrahydrofolate to 10-formyltetrahydrofolate. This chain is Bifunctional protein FolD, found in Streptococcus pneumoniae (strain ATCC BAA-255 / R6).